A 294-amino-acid polypeptide reads, in one-letter code: Homeobox-leucine zipper protein ATHB-13 (294 aa).

The homeobox DNA-binding region spans 82 to 141 (MGEKKRRLNMEQVKTLEKNFELGNKLEPERKMQLARALGLQPRQIAIWFQNRRARWKTKQ). The interval 142 to 177 (LEKDYDTLKRQFDTLKAENDLLQTHNQKLQAEIMGL) is leucine-zipper. A disordered region spans residues 181 to 246 (EQTESINLNK…FFPPSPATAT (66 aa)). Over residues 197–210 (SNRSDNSSDNLRLD) the composition is skewed to low complexity. Residues 214–223 (APPSNDSTLT) are compositionally biased toward polar residues.

It belongs to the HD-ZIP homeobox family. Class I subfamily. Predominantly expressed in leaves and flowers.

It is found in the nucleus. Its function is as follows. Probable transcription factor that may act in the sucrose-signaling pathway. The protein is Homeobox-leucine zipper protein ATHB-13 (ATHB-13) of Arabidopsis thaliana (Mouse-ear cress).